Consider the following 434-residue polypeptide: Adenylosuccinate synthetase (434 aa).

GTP contacts are provided by residues G22–K28 and G50–T52. D23 (proton acceptor) is an active-site residue. Mg(2+) contacts are provided by D23 and G50. IMP is bound by residues D23–K26, N48–H51, T139, R153, Q234, T249, and R313. The Proton donor role is filled by H51. A309 to R315 lines the substrate pocket. Residues R315, K341 to D343, and S423 to G425 each bind GTP.

It belongs to the adenylosuccinate synthetase family. Homodimer. Mg(2+) serves as cofactor.

Its subcellular location is the cytoplasm. It catalyses the reaction IMP + L-aspartate + GTP = N(6)-(1,2-dicarboxyethyl)-AMP + GDP + phosphate + 2 H(+). It functions in the pathway purine metabolism; AMP biosynthesis via de novo pathway; AMP from IMP: step 1/2. Its function is as follows. Plays an important role in the de novo pathway of purine nucleotide biosynthesis. Catalyzes the first committed step in the biosynthesis of AMP from IMP. This chain is Adenylosuccinate synthetase, found in Pelodictyon phaeoclathratiforme (strain DSM 5477 / BU-1).